The sequence spans 150 residues: UPF0178 protein PputW619_5044 (150 aa).

The protein belongs to the UPF0178 family.

The chain is UPF0178 protein PputW619_5044 from Pseudomonas putida (strain W619).